A 558-amino-acid polypeptide reads, in one-letter code: Dihydroxy-acid dehydratase (558 aa).

A Mg(2+)-binding site is contributed by Asp81. A [2Fe-2S] cluster-binding site is contributed by Cys122. Mg(2+)-binding residues include Asp123 and Lys124. Position 124 is an N6-carboxylysine (Lys124). Cys195 is a [2Fe-2S] cluster binding site. Residue Glu447 participates in Mg(2+) binding. Ser473 functions as the Proton acceptor in the catalytic mechanism.

It belongs to the IlvD/Edd family. Homodimer. [2Fe-2S] cluster serves as cofactor. Requires Mg(2+) as cofactor.

The enzyme catalyses (2R)-2,3-dihydroxy-3-methylbutanoate = 3-methyl-2-oxobutanoate + H2O. The catalysed reaction is (2R,3R)-2,3-dihydroxy-3-methylpentanoate = (S)-3-methyl-2-oxopentanoate + H2O. Its pathway is amino-acid biosynthesis; L-isoleucine biosynthesis; L-isoleucine from 2-oxobutanoate: step 3/4. It participates in amino-acid biosynthesis; L-valine biosynthesis; L-valine from pyruvate: step 3/4. Functions in the biosynthesis of branched-chain amino acids. Catalyzes the dehydration of (2R,3R)-2,3-dihydroxy-3-methylpentanoate (2,3-dihydroxy-3-methylvalerate) into 2-oxo-3-methylpentanoate (2-oxo-3-methylvalerate) and of (2R)-2,3-dihydroxy-3-methylbutanoate (2,3-dihydroxyisovalerate) into 2-oxo-3-methylbutanoate (2-oxoisovalerate), the penultimate precursor to L-isoleucine and L-valine, respectively. This chain is Dihydroxy-acid dehydratase, found in Bacillus velezensis (strain DSM 23117 / BGSC 10A6 / LMG 26770 / FZB42) (Bacillus amyloliquefaciens subsp. plantarum).